The sequence spans 95 residues: Protein TusB (95 aa).

Belongs to the DsrH/TusB family. As to quaternary structure, heterohexamer, formed by a dimer of trimers. The hexameric TusBCD complex contains 2 copies each of TusB, TusC and TusD. The TusBCD complex interacts with TusE.

It localises to the cytoplasm. Functionally, part of a sulfur-relay system required for 2-thiolation of 5-methylaminomethyl-2-thiouridine (mnm(5)s(2)U) at tRNA wobble positions. The protein is Protein TusB of Pectobacterium carotovorum subsp. carotovorum (strain PC1).